The primary structure comprises 207 residues: MLENYSLLLSVGYCITKPEVVCKLEHGQVLWILEEESPSQSHLDCCIDDDLMEKRQENQDQHLQKVDFVNNKTLTMDRNGVLGKTFSLDTNPILSRKIRGNCDSSGMNLNNISELIISNRSSFVRNPAECNVRGKFLLCMKRENPYARGKPLEYDGNGKAVSQNEDLFRHQYIQTLKQCFEYNQCGKAFHEEAACSTHKRVCSWETL.

One can recognise a KRAB domain in the interval 1–43 (MLENYSLLLSVGYCITKPEVVCKLEHGQVLWILEEESPSQSHL). The C2H2-type; atypical zinc finger occupies 177-202 (KQCFEYNQCGKAFHEEAACSTHKRVC).

It belongs to the krueppel C2H2-type zinc-finger protein family.

It localises to the nucleus. In terms of biological role, may be involved in transcriptional regulation. This is Zinc finger protein 487 (ZNF487) from Homo sapiens (Human).